We begin with the raw amino-acid sequence, 359 residues long: WAT1-related protein At5g64700 (359 aa).

10 helical membrane passes run 10–30 (LMVTIIQVIYTIMFLISKAVF), 37–57 (FVFVFYRQAFATIFLAPLAFF), 66–86 (LSFVTFIKIFMLSLFGVTLSL), 100–120 (LAAATTASLPAITFFLALLFG), 135–155 (LVGITVCMGGVIILAIYKGPL), 186–206 (WLKGCVLMITSNILWGLWLVL), 218–238 (LYFTTLHCLLSSIQSFVIAIA), 256–276 (AVIYCGFIVTGVAYYLQSWVI), 282–302 (VFLSMFTPLSLLFTLLSSAIL), and 306–326 (IISLGSIVGGLLLIIGLYCVL). 2 consecutive EamA domains span residues 18–136 (IYTI…AKLV) and 198–326 (ILWG…YCVL).

The protein belongs to the drug/metabolite transporter (DMT) superfamily. Plant drug/metabolite exporter (P-DME) (TC 2.A.7.4) family.

The protein localises to the membrane. The polypeptide is WAT1-related protein At5g64700 (Arabidopsis thaliana (Mouse-ear cress)).